The sequence spans 896 residues: Echinoderm microtubule-associated protein-like 3 (896 aa).

Met-1 carries the N-acetylmethionine modification. Residues 16–43 adopt a coiled-coil conformation; sequence LQSLSQRLRVQEQEMELVKAALAEALRL. The segment at 50 to 209 is disordered; the sequence is PSSLQGSGTP…GGPGSRRSNY (160 aa). A compositionally biased stretch (polar residues) spans 77-88; it reads TPSLVSRGTQTE. A compositionally biased stretch (pro residues) spans 134–145; sequence PGPPGILRPLQP. Residues 154–163 are compositionally biased toward low complexity; the sequence is RNSSSSSSPS. The span at 174–189 shows a compositional bias: polar residues; the sequence is AISSANLLVRSGSTES. Phosphoserine is present on residues Ser-176, Ser-198, and Ser-204. WD repeat units lie at residues 234–286, 295–344, 350–392, 398–434, 448–487, 504–543, 549–584, 589–626, 629–667, 674–709, 716–755, 765–823, and 830–869; these read RSLE…LYRP, GGGQ…IWDS, LQEI…VWDC, LAEI…FWNW, RKQG…TWGR, YGIV…QWGP, QEAE…LRGD, FSPV…LWDG, HALA…VLDT, SDVI…IYSV, SSRF…YWDV, RYES…LFQY, and APSR…QWRV. The interval 876–896 is disordered; that stretch reads GPAPATPSRTPSLSPASSLDV. Over residues 877–896 the composition is skewed to low complexity; the sequence is PAPATPSRTPSLSPASSLDV. Thr-881 bears the Phosphothreonine; by CDK1 mark. Ser-883 is subject to Phosphoserine.

Belongs to the WD repeat EMAP family. Homotrimer; self-association is mediated by the N-terminal coiled coil. Interacts with EML2 but not with EML1. Interacts (phosphorylated at Thr-881) with TUBG1, HAUS1, HAUS2, HAUS3, HAUS4, HAUS5, HAUS6, HAUS7 and HAUS8. Post-translationally, phosphorylation at Thr-881 during mitosis is required for interaction with TUBG1, HAUS1, HAUS2, HAUS3, HAUS4, HAUS5, HAUS6, HAUS7 and HAUS8 and their recruitment to spindle microtubules.

It localises to the cytoplasm. The protein localises to the cytoskeleton. It is found in the nucleus. The protein resides in the midbody. Its subcellular location is the spindle. Regulates mitotic spindle assembly, microtubule (MT)-kinetochore attachment and chromosome separation via recruitment of HAUS augmin-like complex and TUBG1 to the existing MTs and promoting MT-based MT nucleation. Required for proper alignnment of chromosomes during metaphase. The chain is Echinoderm microtubule-associated protein-like 3 (EML3) from Homo sapiens (Human).